The sequence spans 504 residues: NADH-quinone oxidoreductase subunit N (504 aa).

The next 14 helical transmembrane spans lie at 9 to 29, 38 to 58, 78 to 98, 114 to 134, 135 to 155, 164 to 184, 216 to 236, 254 to 274, 282 to 302, 309 to 329, 341 to 361, 392 to 412, 425 to 447, and 476 to 496; these read IALL…LSII, AVLT…HMMW, VLYV…GYVW, LLIA…IVLF, LGIE…VFSK, YIIL…FIYC, IVIG…CVPF, YLAT…LLIL, LHIF…LMAI, RMLA…LIAL, ISVY…IVNI, VIFV…GFIG, LWFL…LKII, and FMVI…QFIV.

Belongs to the complex I subunit 2 family. As to quaternary structure, NDH-1 is composed of 13 different subunits. Subunits NuoA, H, J, K, L, M, N constitute the membrane sector of the complex.

Its subcellular location is the cell inner membrane. It carries out the reaction a quinone + NADH + 5 H(+)(in) = a quinol + NAD(+) + 4 H(+)(out). Its function is as follows. NDH-1 shuttles electrons from NADH, via FMN and iron-sulfur (Fe-S) centers, to quinones in the respiratory chain. The immediate electron acceptor for the enzyme in this species is believed to be ubiquinone. Couples the redox reaction to proton translocation (for every two electrons transferred, four hydrogen ions are translocated across the cytoplasmic membrane), and thus conserves the redox energy in a proton gradient. This is NADH-quinone oxidoreductase subunit N from Blochmanniella floridana.